Consider the following 165-residue polypeptide: Shikimate kinase (165 aa).

Residue 12 to 17 (GCGKST) coordinates ATP. Mg(2+) is bound at residue serine 16. Substrate contacts are provided by aspartate 34, arginine 57, and glycine 79. Arginine 116 serves as a coordination point for ATP. Arginine 133 is a binding site for substrate.

It belongs to the shikimate kinase family. As to quaternary structure, monomer. Mg(2+) serves as cofactor.

The protein resides in the cytoplasm. It catalyses the reaction shikimate + ATP = 3-phosphoshikimate + ADP + H(+). Its pathway is metabolic intermediate biosynthesis; chorismate biosynthesis; chorismate from D-erythrose 4-phosphate and phosphoenolpyruvate: step 5/7. In terms of biological role, catalyzes the specific phosphorylation of the 3-hydroxyl group of shikimic acid using ATP as a cosubstrate. This chain is Shikimate kinase, found in Clostridium botulinum (strain Alaska E43 / Type E3).